A 443-amino-acid chain; its full sequence is ATP synthase subunit b-delta (443 aa).

The tract at residues 1–168 is ATP synthase subunit b; that stretch reads MSTFIGQLIG…PSDAALDDAV (168 aa). Residues 4-24 traverse the membrane as a helical segment; that stretch reads FIGQLIGFAVIVFLLVRFVVP. Residues 169–443 form an ATP synthase subunit delta region; sequence GSRMRSTSRE…LASAETQLPD (275 aa).

The protein in the N-terminal section; belongs to the ATPase B chain family. This sequence in the C-terminal section; belongs to the ATPase delta chain family. As to quaternary structure, F-type ATPases have 2 components, F(1) - the catalytic core - and F(0) - the membrane proton channel. F(1) has five subunits: alpha(3), beta(3), gamma(1), delta(1), epsilon(1). F(0) has three main subunits: a(1), b(2) and c(10-14). The alpha and beta chains form an alternating ring which encloses part of the gamma chain. F(1) is attached to F(0) by a central stalk formed by the gamma and epsilon chains, while a peripheral stalk is formed by the delta and b chains.

The protein localises to the cell membrane. In terms of biological role, f(1)F(0) ATP synthase produces ATP from ADP in the presence of a proton or sodium gradient. F-type ATPases consist of two structural domains, F(1) containing the extramembraneous catalytic core and F(0) containing the membrane proton channel, linked together by a central stalk and a peripheral stalk. During catalysis, ATP synthesis in the catalytic domain of F(1) is coupled via a rotary mechanism of the central stalk subunits to proton translocation. Functionally, this fusion protein includes a component of the F(0) channel (subunit b) and of the F(1) subunit (subunit delta). Two copies of subunit b and one of delta together form the peripheral 'stator' stalk which links F(1) to F(0). This is ATP synthase subunit b-delta (atpFH) from Mycobacterium sp. (strain JLS).